The sequence spans 111 residues: Disintegrin DS-AN (111 aa).

A signal peptide spans 1-20 (MIQVLLVIICLAVFPYQGSC). The propeptide occupies 21–47 (IILESGNVNDYEIVYPKKLIVLPTGAM). The region spanning 47-111 (MNSPHPCCDP…PDCPRNPYKD (65 aa)) is the Disintegrin domain. 4 cysteine pairs are disulfide-bonded: C53-C76, C67-C73, C72-C97, and C85-C104. Positions 89–91 (RGD) match the Cell attachment site motif.

Heterodimer; disulfide-linked.

The protein resides in the secreted. Inhibits ADP-induced platelet aggregation in human platelet-rich plasma (IC(50) is 8 uM). The chain is Disintegrin DS-AN from Atheris nitschei (Great lakes bush viper).